Reading from the N-terminus, the 320-residue chain is Rhomboid-like protein 17, chloroplastic (320 aa).

A chloroplast-targeting transit peptide spans 1 to 87 (MHAIFSSFSR…LKFGNVMESR (87 aa)). 5 consecutive transmembrane segments (helical) span residues 116–136 (WING…AVFT), 160–180 (LITS…MIGI), 199–219 (LYFA…ALLA), 247–267 (MFAI…YFAL), and 295–315 (IASS…WARI).

Belongs to the peptidase S54 family.

Its subcellular location is the plastid. The protein resides in the chloroplast membrane. In terms of biological role, probable rhomboid-type serine protease that catalyzes intramembrane proteolysis. In Arabidopsis thaliana (Mouse-ear cress), this protein is Rhomboid-like protein 17, chloroplastic.